Here is a 344-residue protein sequence, read N- to C-terminus: Serpentine receptor class delta-3 (344 aa).

The next 7 membrane-spanning stretches (helical) occupy residues 21–41 (IIGY…IILI), 54–74 (MLHL…MLAL), 102–122 (FLHV…MISF), 142–162 (ICIL…SDVA), 203–223 (FSAI…IVFF), 259–279 (IVPI…FQVV), and 287–307 (MPFR…LYFV).

Belongs to the nematode receptor-like protein srd family.

It is found in the membrane. This Caenorhabditis elegans protein is Serpentine receptor class delta-3 (srd-3).